The sequence spans 421 residues: UDP-N-acetylglucosamine 1-carboxyvinyltransferase (421 aa).

Residue 22 to 23 (KN) coordinates phosphoenolpyruvate. Arginine 92 serves as a coordination point for UDP-N-acetyl-alpha-D-glucosamine. Cysteine 116 (proton donor) is an active-site residue. Cysteine 116 carries the post-translational modification 2-(S-cysteinyl)pyruvic acid O-phosphothioketal. UDP-N-acetyl-alpha-D-glucosamine contacts are provided by aspartate 306 and valine 328.

The protein belongs to the EPSP synthase family. MurA subfamily.

It localises to the cytoplasm. It carries out the reaction phosphoenolpyruvate + UDP-N-acetyl-alpha-D-glucosamine = UDP-N-acetyl-3-O-(1-carboxyvinyl)-alpha-D-glucosamine + phosphate. It participates in cell wall biogenesis; peptidoglycan biosynthesis. Its function is as follows. Cell wall formation. Adds enolpyruvyl to UDP-N-acetylglucosamine. The chain is UDP-N-acetylglucosamine 1-carboxyvinyltransferase from Thermotoga petrophila (strain ATCC BAA-488 / DSM 13995 / JCM 10881 / RKU-1).